The primary structure comprises 92 residues: Small ribosomal subunit protein uS17 (92 aa).

It belongs to the universal ribosomal protein uS17 family. In terms of assembly, part of the 30S ribosomal subunit.

In terms of biological role, one of the primary rRNA binding proteins, it binds specifically to the 5'-end of 16S ribosomal RNA. This chain is Small ribosomal subunit protein uS17, found in Cupriavidus necator (strain ATCC 17699 / DSM 428 / KCTC 22496 / NCIMB 10442 / H16 / Stanier 337) (Ralstonia eutropha).